A 327-amino-acid chain; its full sequence is MEELLIENSQRFTIFPIQHPECWNWYKKLESMTWTAQEVDMCKDIDDWEAMPKPQREFYKQILAFFVVADEIVIENLLTNFMREIKVKEVLYFYTMQAAQECVHSEAYSIQVKTLIPDEKEQQRIFSGIEKHPIIKKMAQWVRQWMDPARNSLGERLVGFAAVEGILFQNHFVAIQFLKEQNIMPGLVSYNEFISRDEGMHCSFACFLISNYVYNIPEEKIIHKILKEAVELVDEFINYAFDKARGRVPGFSKEMLFQYIRYFTDNLCFMMQCKSIYNVGNPFPQMTKFFLNEVEKTNFFELRPTQYQNCVKDDAFAFKLFLDDDDF.

3 residues coordinate Fe cation: aspartate 70, glutamate 101, and histidine 104. The active site involves tyrosine 108. Fe cation-binding residues include glutamate 164, glutamate 198, and histidine 201.

It belongs to the ribonucleoside diphosphate reductase small chain family. In terms of assembly, heterotetramer composed of a homodimer of the large subunit (R1) and a homodimer of the small subunit (R2). Larger multisubunit protein complex are also active, composed of (R1)n(R2)n. It depends on Fe cation as a cofactor.

It carries out the reaction a 2'-deoxyribonucleoside 5'-diphosphate + [thioredoxin]-disulfide + H2O = a ribonucleoside 5'-diphosphate + [thioredoxin]-dithiol. Its function is as follows. Ribonucleoside-diphosphate reductase holoenzyme provides the precursors necessary for viral DNA synthesis. Allows virus growth in non-dividing cells. Catalyzes the biosynthesis of deoxyribonucleotides from the corresponding ribonucleotides. The protein is Ribonucleoside-diphosphate reductase small chain of African swine fever virus (isolate Tick/Malawi/Lil 20-1/1983) (ASFV).